The chain runs to 637 residues: Protein kinase domain-containing protein ppk3 (637 aa).

In terms of domain architecture, Protein kinase spans 1–296; that stretch reads MDFIKSAASF…QLLSSKLEVI (296 aa). One copy of the HEAT repeat lies at 414–450; that stretch reads KTLNNELLRSLAVVQNDQHPTLRTNSTICLGKIAEYL. Positions 576–586 are enriched in basic and acidic residues; that stretch reads NDTTEIKEKKN. The tract at residues 576–637 is disordered; sequence NDTTEIKEKK…ENNVEESWGL (62 aa). Residues 608-631 are compositionally biased toward acidic residues; it reads ETEEQIDESWMENWNDEEETENNV.

It is found in the golgi apparatus. In Schizosaccharomyces pombe (strain 972 / ATCC 24843) (Fission yeast), this protein is Protein kinase domain-containing protein ppk3 (ppk3).